A 199-amino-acid chain; its full sequence is Ribosome maturation factor RimM (199 aa).

The 74-residue stretch at 95-168 folds into the PRC barrel domain; the sequence is EDEFYHADLV…FVRVDPVAAG (74 aa). A disordered region spans residues 167–199; sequence AGLVEDEDGDAPREEDFDPKGRPRGPRDAGGNR. Positions 176–193 are enriched in basic and acidic residues; it reads DAPREEDFDPKGRPRGPR.

The protein belongs to the RimM family. Binds ribosomal protein uS19.

Its subcellular location is the cytoplasm. In terms of biological role, an accessory protein needed during the final step in the assembly of 30S ribosomal subunit, possibly for assembly of the head region. Essential for efficient processing of 16S rRNA. May be needed both before and after RbfA during the maturation of 16S rRNA. It has affinity for free ribosomal 30S subunits but not for 70S ribosomes. The sequence is that of Ribosome maturation factor RimM from Mesorhizobium japonicum (strain LMG 29417 / CECT 9101 / MAFF 303099) (Mesorhizobium loti (strain MAFF 303099)).